Reading from the N-terminus, the 255-residue chain is Coniferyl-alcohol dehydrogenase (255 aa).

NAD(+) is bound by residues 12–17, D36, 51–52, and G77; these read GVSSGI and DL. S117 lines the substrate pocket. 2 residues coordinate NAD(+): Y157 and K161. Y157 (proton acceptor) is an active-site residue.

It belongs to the short-chain dehydrogenases/reductases (SDR) family.

The catalysed reaction is (E)-coniferol + NADP(+) = (E)-coniferaldehyde + NADPH + H(+). Catalyzes the conversion of coniferyl alcohol into coniferyl aldehyde in the eugenol degradation pathway. Specific for coniferyl alcohol; does not act on cinnamyl alcohol, 4-coumaryl alcohol or sinapyl alcohol. This is Coniferyl-alcohol dehydrogenase (calA) from Pseudomonas sp. (strain HR199 / DSM 7063).